We begin with the raw amino-acid sequence, 271 residues long: Protein-L-isoaspartate O-methyltransferase (271 aa).

Residues methionine 1–arginine 15 are compositionally biased toward pro residues. Positions methionine 1–leucine 60 are disordered. The span at proline 39–alanine 49 shows a compositional bias: low complexity. The active site involves serine 119.

The protein belongs to the methyltransferase superfamily. L-isoaspartyl/D-aspartyl protein methyltransferase family.

Its subcellular location is the cytoplasm. It carries out the reaction [protein]-L-isoaspartate + S-adenosyl-L-methionine = [protein]-L-isoaspartate alpha-methyl ester + S-adenosyl-L-homocysteine. In terms of biological role, catalyzes the methyl esterification of L-isoaspartyl residues in peptides and proteins that result from spontaneous decomposition of normal L-aspartyl and L-asparaginyl residues. It plays a role in the repair and/or degradation of damaged proteins. This is Protein-L-isoaspartate O-methyltransferase from Bordetella petrii (strain ATCC BAA-461 / DSM 12804 / CCUG 43448).